A 366-amino-acid polypeptide reads, in one-letter code: tRNA N6-adenosine threonylcarbamoyltransferase (366 aa).

A divalent metal cation is bound by residues histidine 130, histidine 134, and tyrosine 151. Substrate is bound by residues 151-155, aspartate 183, glycine 198, glutamate 202, and asparagine 297; that span reads YVSGG. Aspartate 325 contacts a divalent metal cation.

This sequence belongs to the KAE1 / TsaD family. As to quaternary structure, component of the EKC/KEOPS complex composed of at least BUD32, CGI121, GON7, KAE1 and PCC1; the whole complex dimerizes. The cofactor is a divalent metal cation.

Its subcellular location is the cytoplasm. It localises to the nucleus. It carries out the reaction L-threonylcarbamoyladenylate + adenosine(37) in tRNA = N(6)-L-threonylcarbamoyladenosine(37) in tRNA + AMP + H(+). Functionally, component of the EKC/KEOPS complex that is required for the formation of a threonylcarbamoyl group on adenosine at position 37 (t(6)A37) in tRNAs that read codons beginning with adenine. The complex is probably involved in the transfer of the threonylcarbamoyl moiety of threonylcarbamoyl-AMP (TC-AMP) to the N6 group of A37. KAE1 likely plays a direct catalytic role in this reaction, but requires other protein(s) of the complex to fulfill this activity. The EKC/KEOPS complex also promotes both telomere uncapping and telomere elongation. The complex is required for efficient recruitment of transcriptional coactivators. In Cryptococcus neoformans var. neoformans serotype D (strain JEC21 / ATCC MYA-565) (Filobasidiella neoformans), this protein is tRNA N6-adenosine threonylcarbamoyltransferase.